The following is a 452-amino-acid chain: Phosphoglucosamine mutase (452 aa).

S108 (phosphoserine intermediate) is an active-site residue. Mg(2+)-binding residues include S108, D247, D249, and D251. A Phosphoserine modification is found at S108.

It belongs to the phosphohexose mutase family. Requires Mg(2+) as cofactor. Post-translationally, activated by phosphorylation.

It carries out the reaction alpha-D-glucosamine 1-phosphate = D-glucosamine 6-phosphate. Its function is as follows. Catalyzes the conversion of glucosamine-6-phosphate to glucosamine-1-phosphate. The chain is Phosphoglucosamine mutase from Burkholderia pseudomallei (strain 668).